The sequence spans 146 residues: Large ribosomal subunit protein bL9 (146 aa).

Belongs to the bacterial ribosomal protein bL9 family.

Binds to the 23S rRNA. This chain is Large ribosomal subunit protein bL9, found in Symbiobacterium thermophilum (strain DSM 24528 / JCM 14929 / IAM 14863 / T).